Consider the following 139-residue polypeptide: Large ribosomal subunit protein uL16c (139 aa).

This sequence belongs to the universal ribosomal protein uL16 family. In terms of assembly, part of the 50S ribosomal subunit.

The protein localises to the plastid. It localises to the chloroplast. The chain is Large ribosomal subunit protein uL16c from Cryptomeria japonica (Japanese cedar).